Here is a 200-residue protein sequence, read N- to C-terminus: NADH-quinone oxidoreductase chain 10 (200 aa).

The next 5 membrane-spanning stretches (helical) occupy residues 2 to 22, 26 to 46, 51 to 71, 90 to 110, and 144 to 164; these read MTFA…MVVI, PVHS…LFVL, FVAM…FLFV, LPLA…AFSG, and VLMF…AIVL.

This sequence belongs to the complex I subunit 6 family. In terms of assembly, NDH-1 is composed of at least 14 different subunits, Nqo1 to Nqo14. The complex has a L-shaped structure, with the hydrophobic arm (subunits Nqo7, Nqo8, Nqo10 to Nqo14) embedded in the inner membrane and the hydrophilic peripheral arm (subunits Nqo1 to Nqo6, Nqo9) protruding into the bacterial cytoplasm. The hydrophilic domain contains all the redox centers.

It localises to the cell inner membrane. It catalyses the reaction a quinone + NADH + 5 H(+)(in) = a quinol + NAD(+) + 4 H(+)(out). NDH-1 shuttles electrons from NADH, via FMN and iron-sulfur (Fe-S) centers, to quinones in the respiratory chain. The immediate electron acceptor for the enzyme in this species is believed to be ubiquinone. Couples the redox reaction to proton translocation (for every two electrons transferred, four hydrogen ions are translocated across the cytoplasmic membrane), and thus conserves the redox energy in a proton gradient. This is NADH-quinone oxidoreductase chain 10 from Paracoccus denitrificans.